The primary structure comprises 185 residues: MTPPREEVVLLAEDGAPIGTADKATVHSESTPLHLAFSCHLFDGDGRILVTRRALGKATWPGVWTNSFCGHPALGESLEEAIARRAHEELGTSVDALALALALPDFRYRAVDATGVVEHEMCPVYTATIAWELRPSADEVAEWEWADPRALLSSVAATPWAFSPWLTLQLPALYAASGDQPSGQL.

Mn(2+) is bound by residues His-27 and His-34. Residues 32–168 (PLHLAFSCHL…PWAFSPWLTL (137 aa)) form the Nudix hydrolase domain. The active site involves Cys-69. Cys-69 provides a ligand contact to Mg(2+). His-71 contributes to the Mn(2+) binding site. Residue Glu-89 participates in Mg(2+) binding. 2 residues coordinate Mn(2+): Glu-118 and Glu-120. Residue Glu-120 is part of the active site.

This sequence belongs to the IPP isomerase type 1 family. The cofactor is Mg(2+). Mn(2+) is required as a cofactor.

The protein localises to the cytoplasm. The enzyme catalyses isopentenyl diphosphate = dimethylallyl diphosphate. Its pathway is isoprenoid biosynthesis; dimethylallyl diphosphate biosynthesis; dimethylallyl diphosphate from isopentenyl diphosphate: step 1/1. In terms of biological role, catalyzes the 1,3-allylic rearrangement of the homoallylic substrate isopentenyl (IPP) to its highly electrophilic allylic isomer, dimethylallyl diphosphate (DMAPP). This Leifsonia xyli subsp. xyli (strain CTCB07) protein is Isopentenyl-diphosphate Delta-isomerase.